The chain runs to 235 residues: 2-C-methyl-D-erythritol 4-phosphate cytidylyltransferase (235 aa).

The protein belongs to the IspD/TarI cytidylyltransferase family. IspD subfamily.

The catalysed reaction is 2-C-methyl-D-erythritol 4-phosphate + CTP + H(+) = 4-CDP-2-C-methyl-D-erythritol + diphosphate. It functions in the pathway isoprenoid biosynthesis; isopentenyl diphosphate biosynthesis via DXP pathway; isopentenyl diphosphate from 1-deoxy-D-xylulose 5-phosphate: step 2/6. Functionally, catalyzes the formation of 4-diphosphocytidyl-2-C-methyl-D-erythritol from CTP and 2-C-methyl-D-erythritol 4-phosphate (MEP). The polypeptide is 2-C-methyl-D-erythritol 4-phosphate cytidylyltransferase (Pseudomonas putida (strain GB-1)).